The chain runs to 124 residues: Small ribosomal subunit protein uS13 (124 aa).

The segment covering 92–117 (RRGLPVRGQRTKSNARTRKGPRKTVA) has biased composition (basic residues). Residues 92–124 (RRGLPVRGQRTKSNARTRKGPRKTVANKKIESK) are disordered.

Belongs to the universal ribosomal protein uS13 family. In terms of assembly, part of the 30S ribosomal subunit. Forms a loose heterodimer with protein S19. Forms two bridges to the 50S subunit in the 70S ribosome.

In terms of biological role, located at the top of the head of the 30S subunit, it contacts several helices of the 16S rRNA. In the 70S ribosome it contacts the 23S rRNA (bridge B1a) and protein L5 of the 50S subunit (bridge B1b), connecting the 2 subunits; these bridges are implicated in subunit movement. Contacts the tRNAs in the A and P-sites. This Mycoplasmoides gallisepticum (strain R(low / passage 15 / clone 2)) (Mycoplasma gallisepticum) protein is Small ribosomal subunit protein uS13.